Reading from the N-terminus, the 85-residue chain is Large ribosomal subunit protein bL31B (85 aa).

This sequence belongs to the bacterial ribosomal protein bL31 family. Type B subfamily. In terms of assembly, part of the 50S ribosomal subunit.

This is Large ribosomal subunit protein bL31B from Staphylococcus saprophyticus subsp. saprophyticus (strain ATCC 15305 / DSM 20229 / NCIMB 8711 / NCTC 7292 / S-41).